The sequence spans 375 residues: D-aspartate oxidase (375 aa).

Residues 1 to 17 form the signal peptide; it reads MATVCVVGSGILGLAVA. FAD contacts are provided by serine 9, leucine 12, aspartate 34, serine 51, and glycine 55. Residue asparagine 203 is glycosylated (N-linked (GlcNAc...) asparagine). Positions 322, 354, and 355 each coordinate FAD.

Belongs to the DAMOX/DASOX family. The cofactor is FAD.

It carries out the reaction D-aspartate + O2 + H2O = oxaloacetate + H2O2 + NH4(+). The enzyme catalyses D-glutamate + O2 + H2O = H2O2 + 2-oxoglutarate + NH4(+). Functionally, selectively catalyzes the oxidative deamination of acidic amino acids. Protects the organism from the toxicity of D-amino acids. Enables the organism to utilize D-amino acids as a source of nutrients. Enables the organism to utilize D-aspartate as a nitrogen source. The polypeptide is D-aspartate oxidase (DDO) (Komagataella phaffii (strain GS115 / ATCC 20864) (Yeast)).